Here is a 682-residue protein sequence, read N- to C-terminus: Penicillin-binding protein activator LpoA (682 aa).

A signal peptide spans 1–26; it reads MLPLNSVRTHAGRLVPVMLAALFLAG. The N-palmitoyl cysteine moiety is linked to residue Cys-27. A lipid anchor (S-diacylglycerol cysteine) is attached at Cys-27. Disordered regions lie at residues 240-262 and 314-341; these read AKQL…TGET and ANNA…VSPT. Low complexity predominate over residues 248–262; that stretch reads GGTPPAAAAPTTGET.

It belongs to the LpoA family. Interacts with PBP1a.

The protein resides in the cell outer membrane. Regulator of peptidoglycan synthesis that is essential for the function of penicillin-binding protein 1A (PBP1a). This chain is Penicillin-binding protein activator LpoA, found in Dickeya chrysanthemi (strain Ech1591) (Dickeya zeae (strain Ech1591)).